A 1256-amino-acid polypeptide reads, in one-letter code: GPI inositol-deacylase (1256 aa).

Positions 37 to 48 (DVYANSTTNATA) are enriched in polar residues. A disordered region spans residues 37–203 (DVYANSTTNA…MEKEEEQKFV (167 aa)). N-linked (GlcNAc...) asparagine glycosylation is found at N41 and N45. Residues 59 to 68 (PRPSRPSQSS) are compositionally biased toward low complexity. Residues 69-83 (AAERTSPESPSVRQS) show a composition bias toward polar residues. Residues 107–135 (QSPSQQSQNQQQQQQQQQQQQQQQQQQQS) show a composition bias toward low complexity. Residues 143–156 (SGNFNWKLSHSRNG) show a composition bias toward polar residues. A glycan (N-linked (GlcNAc...) asparagine) is linked at N155. The span at 165–180 (FFSSSFSHSPSTPPLS) shows a compositional bias: low complexity. Basic and acidic residues predominate over residues 190 to 202 (HSKEMEKEEEQKF). A helical membrane pass occupies residues 214-234 (AITFVTLLISILGIGFLALVL). N235 carries an N-linked (GlcNAc...) asparagine glycan. S397 is a catalytic residue. N-linked (GlcNAc...) asparagine glycosylation occurs at N582. 2 helical membrane-spanning segments follow: residues 882–902 (LYMR…TLVL) and 929–949 (SIPL…NSSS). Residue N960 is glycosylated (N-linked (GlcNAc...) asparagine). Helical transmembrane passes span 980-1000 (PFFW…CTVF), 1005-1025 (LTLV…PGWI), 1053-1073 (ILLV…VCCL), 1103-1123 (SILL…VVWI), 1130-1150 (WLTP…IILV), and 1172-1192 (VLLF…AYML). N1212, N1239, and N1242 each carry an N-linked (GlcNAc...) asparagine glycan.

This sequence belongs to the GPI inositol-deacylase family.

The protein resides in the endoplasmic reticulum membrane. Functionally, involved in inositol deacylation of GPI-anchored proteins which plays important roles in the quality control and ER-associated degradation of GPI-anchored proteins. This chain is GPI inositol-deacylase (bst-1), found in Neurospora crassa (strain ATCC 24698 / 74-OR23-1A / CBS 708.71 / DSM 1257 / FGSC 987).